Consider the following 189-residue polypeptide: Protein GrpE (189 aa).

The span at methionine 1–aspartate 10 shows a compositional bias: polar residues. The disordered stretch occupies residues methionine 1–glutamate 21.

Belongs to the GrpE family. Homodimer.

It is found in the cytoplasm. Participates actively in the response to hyperosmotic and heat shock by preventing the aggregation of stress-denatured proteins, in association with DnaK and GrpE. It is the nucleotide exchange factor for DnaK and may function as a thermosensor. Unfolded proteins bind initially to DnaJ; upon interaction with the DnaJ-bound protein, DnaK hydrolyzes its bound ATP, resulting in the formation of a stable complex. GrpE releases ADP from DnaK; ATP binding to DnaK triggers the release of the substrate protein, thus completing the reaction cycle. Several rounds of ATP-dependent interactions between DnaJ, DnaK and GrpE are required for fully efficient folding. This Pseudomonas paraeruginosa (strain DSM 24068 / PA7) (Pseudomonas aeruginosa (strain PA7)) protein is Protein GrpE.